Reading from the N-terminus, the 260-residue chain is Universal stress protein PHOS34 (260 aa).

Residues 1–33 (MNPDSDYPHLPNIKIHHPSSPRHSHHHSSSTPS) constitute a chloroplast transit peptide. The segment at 1-42 (MNPDSDYPHLPNIKIHHPSSPRHSHHHSSSTPSAATPTPTAG) is disordered. A compositionally biased stretch (basic residues) spans 14 to 28 (KIHHPSSPRHSHHHS). Pro-18 contacts ATP. Ser-20 is modified (phosphoserine; by MAPK3 and MAPK6). Positions 29–41 (SSTPSAATPTPTA) are enriched in low complexity. Val-80 contributes to the ATP binding site. Residues 92-118 (GPLPLQTPPPPSAATDPGAQPKPSQED) form a disordered region. Residues 170 to 179 (GSRGFGAEKR) and 187 to 189 (SVS) contribute to the ATP site. Positions 209 to 260 (RDGPAPPGNVGATREAIVTVKSRRDDDDDDDEDHEAKIAAAASDHHEHIKDE) are disordered. Ser-230 is modified (phosphoserine). Basic and acidic residues predominate over residues 251–260 (SDHHEHIKDE).

This sequence belongs to the universal stress protein A family. Phosphorylated by MAPK3 and MAPK6 after pathogenic elicitation (e.g. bacterial flg22, Phytophthora infestans zoospores and xylanase).

It localises to the plastid. It is found in the chloroplast. In Arabidopsis thaliana (Mouse-ear cress), this protein is Universal stress protein PHOS34.